We begin with the raw amino-acid sequence, 370 residues long: Subtilisin-like protease (370 aa).

An N-terminal signal peptide occupies residues 1–17; the sequence is MIASIVFFIVLVDGVAT. Catalysis depends on charge relay system residues Asp-13, His-35, and Ser-190. The Peptidase S8 domain occupies 18–261; the sequence is GSPNALVTDF…FGEVSPSRLE (244 aa). The region spanning 240–370 is the P/Homo B domain; the sequence is RVTDRWTHRN…TTEGTCHGIR (131 aa).

This sequence belongs to the peptidase S8 family.

The polypeptide is Subtilisin-like protease (ORF47) (Ictalurid herpesvirus 1 (strain Auburn) (IcHV-1)).